Consider the following 125-residue polypeptide: Large ribosomal subunit protein mL51 (125 aa).

The transit peptide at 1-29 directs the protein to the mitochondrion; sequence MWSVQKLLWGCRSLLPQGCRSFSLGNRDL.

Belongs to the mitochondrion-specific ribosomal protein mL51 family. Component of the mitochondrial ribosome large subunit (39S) which comprises a 16S rRNA and about 50 distinct proteins.

The protein resides in the mitochondrion. The polypeptide is Large ribosomal subunit protein mL51 (mrpl51) (Xenopus laevis (African clawed frog)).